The primary structure comprises 1483 residues: MNQIEIQELTTHLSQALDQNYDVVNMDAVLCVICALEGTTITKEQLEATRLAKYINQLRRRTKNEHLARRAKSLLKKWREMVGIQQTATENLAHPSQISSSQPALDLVKSPITSFITEPIAPSQQIVSDLHSNIDSAEPPLSGEHTLLHPNFSNLVNSIKDSDRHENIAITTLHTHKDRRHSHSIRSCHVASPQPIVIDHSVNSVINLTDDSTVKINEASVVIDIASDSDENDNNGSLNPKKLNSIVPAPLPIPSTPSSRQRKLKKEKRSKEREGQVATNTRFGAKASDGFQQAALTTDSEIFSLSNSSMSSIVSGDATSSYSQNKSRLNSNELTFTGRFKAVDHLFRSTESGKHKIDEYSAYDSNASCSRLSPSTVDEVKKAEHLFDAQLTNTTANQIPMSAVSIGYESNTRHEYLESDSPSQIPKRRGRKKGSKGVDALIAKESSSLSQQIFFGGSTVKKVKTTKELFNEIQSRKLSVSMQSSASNLSNSSTNRDLPSHTTFPRQTSSCSDTSMNSPHILETLSGSAIFASKIDDLGNTDSDTVTSDPSHDSNKSQEIKECTSLDSNSNSIQSLPLANNRENLIPTNVNDITTQLMHLIHSLNSPLSEIEIERVYQEKIIPCTCIVIEGVQGTLGESNNSTLDEQSYNAKISLNSKDNLSCHNQDNYSTSQRSVNGEVIDTQPKLVKSIFDLDFDDNDDPLYFIMDEIQKPIARADELKNNKSDTKNINFGASAQNASLNIIHFNDDAQQDNSNQERGKNETQNAIPAFTVHEDPDCLARQRFYIQTNKVTSFHINALHNYYIPNINGNWDSVESFTSFQSEHTIMDTMESYTVTNGADVVPKYGLLTSDRIRKDLSSLKSIKPYRVKNFTSLISPFLGVAKCLPTCRRARRRFKNFVNSSTANDKISNNFESLENMKTSFKNCNPLNVKIDGTTSAIYSHNENHVPMQVNTNVEQLPPSQSFSSNAISYNLLKLADDKVCHDGISDKSSNTGCQGNSPYSSSSSSSYSGRKEDQHIITKNLQNKNIQLNSRKSDMKRRKRIYLENDSKKKKHYRKRIKTAVNRTFSNLHRNLYSIDSENGMKNDYKNEYGNSNNEEYAIVQRPAGDGENCSNHIVLTIKKTPSKINSPANSMTAFSPPSTSDGANLQKSILDLRLEDTNISQSITEIPQKKDLSKTDRIVHQSRSSAYRRIFRKPDKSQTKFIDLDLKHLFHLKANSPCISANAKLHNKLFFPHELSRDNTSGIRERLINYSSSSSSSYDDDSEVENTSFLKKANVNKFSASNNRNLKTETETCAATAISEFKFESDEDSILTSLGDSDIDIQDEIQVINDKVDYCNDFQNNKMLESFNSIFVDSLRTNTKNASDNMGSSAHITSLESLKPENADAITRYCNNNNLGVNLSNELSNISAKPLKSFDSTMKLPSLGIEHCTGIKTSSDMASTNIAEKKLTRIQQFKEWHQVLQLRSYNNEPLIVLPYVLLE.

A TFIIS N-terminal domain is found at 8 to 85; it reads ELTTHLSQAL…KKWREMVGIQ (78 aa). Residues serine 204, serine 258, and serine 421 each carry the phosphoserine modification. Disordered stretches follow at residues 227–278, 414–438, 480–518, 541–575, and 989–1041; these read SDSD…GQVA, HEYL…SKGV, VSMQ…SMNS, TDSD…SIQS, and DKSS…MKRR. Residues 426 to 435 are compositionally biased toward basic residues; the sequence is PKRRGRKKGS. Residues 480-495 show a composition bias toward low complexity; sequence VSMQSSASNLSNSSTN. The span at 496–518 shows a compositional bias: polar residues; it reads RDLPSHTTFPRQTSSCSDTSMNS. Threonine 541 carries the post-translational modification Phosphothreonine. Basic and acidic residues predominate over residues 550–564; it reads PSHDSNKSQEIKECT. Serine 551 carries the post-translational modification Phosphoserine. Polar residues-rich tracts occupy residues 565–575 and 989–999; these read SLDSNSNSIQS and DKSSNTGCQGN. The segment covering 1000–1011 has biased composition (low complexity); that stretch reads SPYSSSSSSSYS. The span at 1020-1033 shows a compositional bias: polar residues; the sequence is ITKNLQNKNIQLNS. Serine 1177 carries the phosphoserine modification. Threonine 1179 carries the post-translational modification Phosphothreonine.

The protein belongs to the Mediator complex subunit 26 family. In terms of assembly, component of the Mediator complex. Interacts with MED6 and MED17.

The protein localises to the nucleus. Functionally, component of the Mediator complex, a coactivator involved in the regulated transcription of nearly all RNA polymerase II-dependent genes. Mediator functions as a bridge to convey information from gene-specific regulatory proteins to the basal RNA polymerase II transcription machinery. Mediator is recruited to promoters by direct interactions with regulatory proteins and serves as a scaffold for the assembly of a functional preinitiation complex with RNA polymerase II and the general transcription factors. Required for activated transcription of the MtnA gene. The sequence is that of Mediator of RNA polymerase II transcription subunit 26 (MED26) from Drosophila melanogaster (Fruit fly).